Consider the following 267-residue polypeptide: Phosphate import ATP-binding protein PstB 2 (267 aa).

The region spanning 21–262 (LSTKDLHVYY…AKLQSTSDYV (242 aa)) is the ABC transporter domain. ATP is bound at residue 53 to 60 (GPSGCGKS).

The protein belongs to the ABC transporter superfamily. Phosphate importer (TC 3.A.1.7) family. In terms of assembly, the complex is composed of two ATP-binding proteins (PstB), two transmembrane proteins (PstC and PstA) and a solute-binding protein (PstS).

It localises to the cell membrane. It catalyses the reaction phosphate(out) + ATP + H2O = ADP + 2 phosphate(in) + H(+). In terms of biological role, part of the ABC transporter complex PstSACB involved in phosphate import. Responsible for energy coupling to the transport system. The protein is Phosphate import ATP-binding protein PstB 2 of Streptococcus mutans serotype c (strain ATCC 700610 / UA159).